A 453-amino-acid chain; its full sequence is Phosphoglucosamine mutase (453 aa).

The Phosphoserine intermediate role is filled by S110. Residues S110, D247, D249, and D251 each coordinate Mg(2+). Phosphoserine is present on S110.

The protein belongs to the phosphohexose mutase family. Requires Mg(2+) as cofactor. Post-translationally, activated by phosphorylation.

It carries out the reaction alpha-D-glucosamine 1-phosphate = D-glucosamine 6-phosphate. In terms of biological role, catalyzes the conversion of glucosamine-6-phosphate to glucosamine-1-phosphate. The polypeptide is Phosphoglucosamine mutase (Tropheryma whipplei (strain TW08/27) (Whipple's bacillus)).